We begin with the raw amino-acid sequence, 416 residues long: Putative pseudouridine transporter (416 aa).

Residues 1–2 (MD) lie on the Periplasmic side of the membrane. Residues 3–23 (IMRSVVGMVVLLAIAFLLSVN) form a helical membrane-spanning segment. Topologically, residues 24 to 31 (KKSISLRT) are cytoplasmic. Residues 32-52 (VGAALLLQIAIGGIMLYFPPG) form a helical membrane-spanning segment. The Periplasmic segment spans residues 53–104 (KWAVEQAALGVHKVMSYSDAGSAFIFGSLVGPKMDVLFDGAGFIFAFRVLPA). The chain crosses the membrane as a helical span at residues 105–125 (IIFVTALISLLYYIGVMGLLI). Over 126 to 172 (RILGSIFQKALNISKIESFVAVTTIFLGQNEIPAIVKPFIDRMNRNE) the chain is Cytoplasmic. A helical membrane pass occupies residues 173–193 (LFTAICSGMASIAGSMMIGYA). Topologically, residues 194–196 (GMG) are periplasmic. The helical transmembrane segment at 197–217 (VPIDYLLAASLMAIPGGILFA) threads the bilayer. Residues 218-268 (RILSPATEPSQVTFENLSFSETPPKSFIEAAASGAMTGLKIAAGVATVVMA) are Cytoplasmic-facing. Residues 269 to 289 (FVAIIALINGIIGGIGGWFGF) form a helical membrane-spanning segment. Topologically, residues 290 to 352 (ANASLESIFG…QTGGTLEVKT (63 aa)) are periplasmic. The helical transmembrane segment at 353-373 (IAIISFALCGFANFGSIGVVV) threads the bilayer. Over 374-394 (GAFSAISPKRAPEIAQLGLRA) the chain is Cytoplasmic. The helical transmembrane segment at 395–415 (LAAATLSNLMSATIAGFFIGL) threads the bilayer. Alanine 416 is a topological domain (periplasmic).

It belongs to the concentrative nucleoside transporter (CNT) (TC 2.A.41) family.

The protein localises to the cell inner membrane. Could be involved in pseudouridine transport. This Escherichia coli (strain K12) protein is Putative pseudouridine transporter (psuT).